Reading from the N-terminus, the 400-residue chain is Methylamine dehydrogenase heavy chain (400 aa).

An N-terminal signal peptide occupies residues 1–27 (MTTFQPGRLAGQLAATALLAATCSAFA).

The protein belongs to the aromatic amine dehydrogenase heavy chain family. As to quaternary structure, tetramer of two light and two heavy chains.

It localises to the periplasm. It carries out the reaction 2 oxidized [amicyanin] + methylamine + H2O = 2 reduced [amicyanin] + formaldehyde + NH4(+) + 2 H(+). Methylamine dehydrogenase carries out the oxidation of methylamine. Electrons are passed from methylamine dehydrogenase to amicyanin. This is Methylamine dehydrogenase heavy chain (mauB) from Methylobacillus flagellatus (strain ATCC 51484 / DSM 6875 / VKM B-1610 / KT).